A 639-amino-acid chain; its full sequence is Probable methyltransferase PMT18 (639 aa).

Over 1-19 (MAKENSSHSLAEAKRKRLT) the chain is Cytoplasmic. A helical; Signal-anchor for type II membrane protein transmembrane segment spans residues 20–42 (WILCVSGLCILSYVLGSWQTNTV). Positions 41–86 (TVPTSSSEAYSRMGCDETSTTTRAQTTQTQTNPSSDDTSSSLSSSE) are disordered. Residues 43–639 (PTSSSEAYSR…VKSYWTGPSS (597 aa)) lie on the Lumenal side of the membrane. Positions 58 to 85 (TSTTTRAQTTQTQTNPSSDDTSSSLSSS) are enriched in low complexity. 2 N-linked (GlcNAc...) asparagine glycosylation sites follow: Asn-104 and Asn-427.

Belongs to the methyltransferase superfamily.

It is found in the endoplasmic reticulum membrane. This is Probable methyltransferase PMT18 from Arabidopsis thaliana (Mouse-ear cress).